The primary structure comprises 500 residues: Plasma protease C1 inhibitor (500 aa).

The N-terminal stretch at Met-1 to Ser-22 is a signal peptide. A compositionally biased stretch (low complexity) spans Ala-20 to Ser-31. The disordered stretch occupies residues Ala-20–Gly-43. Residue Asn-25 is glycosylated (N-linked (GlcNAc...) (complex) asparagine). 2 O-linked (GalNAc...) threonine glycosylation sites follow: Thr-47 and Thr-48. Ser-64 carries O-linked (GalNAc...) serine glycosylation. Positions Leu-65–Thr-118 are disordered. The segment covering Thr-67 to Thr-118 has biased composition (low complexity). A glycan (N-linked (GlcNAc...) asparagine) is linked at Asn-69. Thr-71 is a glycosylation site (O-linked (GalNAc...) threonine). Asn-81 is a glycosylation site (N-linked (GlcNAc...) asparagine). O-linked (GalNAc...) threonine glycosylation is found at Thr-83, Thr-88, Thr-92, and Thr-96. 7 repeat units span residues Glu-85–Thr-88, Gln-89–Thr-92, Glu-93–Thr-96, Gln-97–Ile-100, Gln-101–Gln-104, Pro-105–Gln-108, and Gln-116–Thr-119. The interval Glu-85–Thr-119 is 7 X 4 AA tandem repeats of [QE]-P-T-[TQ]. 2 disulfides stabilise this stretch: Cys-123–Cys-428 and Cys-130–Cys-205. Asn-238 and Asn-253 each carry an N-linked (GlcNAc...) (complex) asparagine glycan. Residue Asn-272 is glycosylated (N-linked (GlcNAc...) asparagine; in variant TA). Residue Asn-352 is glycosylated (N-linked (GlcNAc...) (complex) asparagine).

The protein belongs to the serpin family. As to quaternary structure, interacts with MASP1. (Microbial infection) Binds to E.coli stcE which allows localization of SERPING1 to cell membranes thus protecting the bacteria against complement-mediated lysis. Post-translationally, highly glycosylated (49%) with N- and O-glycosylation. O-glycosylated with core 1 or possibly core 8 glycans. N-glycan heterogeneity at Asn-25: Hex5HexNAc4 (minor), dHex1Hex5HexNAc4 (minor), Hex6HexNAc5 (major) and dHex1Hex6HexNAc5 (minor). Cleaved by C1S in vitro. In terms of processing, (Microbial infection) Can be proteolytically cleaved by E.coli stcE.

It localises to the secreted. In terms of biological role, serine protease inhibitor, which acrs as a regulator of the classical complement pathway. Forms a proteolytically inactive stoichiometric complex with the C1r or C1s proteases. May also regulate blood coagulation, fibrinolysis and the generation of kinins. Very efficient inhibitor of FXIIa. Inhibits chymotrypsin and kallikrein. This chain is Plasma protease C1 inhibitor (SERPING1), found in Homo sapiens (Human).